A 744-amino-acid polypeptide reads, in one-letter code: NAD(P)H-quinone oxidoreductase subunit 5, chloroplastic (744 aa).

Transmembrane regions (helical) follow at residues 9-29 (WIIP…LLFF), 40-60 (WAFQ…NLSI), 89-109 (IDPL…MVLI), 125-145 (FAYM…SNLI), 147-167 (IYIF…FWFT), 185-205 (GDFG…SFEF), 219-239 (NEVN…GAIA), 258-278 (TPIS…FLVA), 290-312 (IMNF…ALAQ), 327-347 (LGYM…FHLI), 354-374 (ALLF…VGYC), 396-416 (TSFF…CFWS), 425-445 (WLYS…TAFY), 549-569 (LFPI…GIPF), 608-628 (VFSV…YKPV), and 724-744 (YLFF…FFHF).

Belongs to the complex I subunit 5 family. In terms of assembly, NDH is composed of at least 16 different subunits, 5 of which are encoded in the nucleus.

The protein resides in the plastid. It localises to the chloroplast thylakoid membrane. The catalysed reaction is a plastoquinone + NADH + (n+1) H(+)(in) = a plastoquinol + NAD(+) + n H(+)(out). It carries out the reaction a plastoquinone + NADPH + (n+1) H(+)(in) = a plastoquinol + NADP(+) + n H(+)(out). Its function is as follows. NDH shuttles electrons from NAD(P)H:plastoquinone, via FMN and iron-sulfur (Fe-S) centers, to quinones in the photosynthetic chain and possibly in a chloroplast respiratory chain. The immediate electron acceptor for the enzyme in this species is believed to be plastoquinone. Couples the redox reaction to proton translocation, and thus conserves the redox energy in a proton gradient. In Gerbera jamesonii (Transvaal daisy), this protein is NAD(P)H-quinone oxidoreductase subunit 5, chloroplastic (ndhF).